A 465-amino-acid chain; its full sequence is MKHIVKHIHFVGIGGAGMSGIAEVLVNLGYQVSGSDLARNAVTDRLAALGARIAIGHDAANIEGANAVVVSTAVRSDNPEVLAARAQRVPIVQRAVMLAELMRLKQGIAIAGTHGKTTTTSLVASVLAAGGLDPTFVIGGRLISAGANARLGTGDFIVAEADESDASFLNLYPVIEVITNIDADHMDTYGHDFARLKQAFIEFTQRLPFYGSAVVCVDDPNVRQIIPFISKPVVRYGLSPDAQVRAEDIDARDGRMHFTVIREGRAPLAVVLNLPGLHNVQNALAAIAIATDLGVSDDAIQQALAEFNGVGRRFQRYGDVPTADGGRYTLIDDYGHHPVEMAATIAAARGAFPGRRLVLAFQPHRYTRTRDCFDDFVNVLSTVDALVLTEVYAAGEAAIATANGDALSRALRAAGKVEPVFVETVDALPEALAKVAQDGDVVITMGAGSIGGVPAKIVQNTQQKG.

Residue 112-118 (GTHGKTT) participates in ATP binding.

Belongs to the MurCDEF family.

It is found in the cytoplasm. The enzyme catalyses UDP-N-acetyl-alpha-D-muramate + L-alanine + ATP = UDP-N-acetyl-alpha-D-muramoyl-L-alanine + ADP + phosphate + H(+). Its pathway is cell wall biogenesis; peptidoglycan biosynthesis. Functionally, cell wall formation. In Burkholderia multivorans (strain ATCC 17616 / 249), this protein is UDP-N-acetylmuramate--L-alanine ligase.